We begin with the raw amino-acid sequence, 81 residues long: MQQEERGSRKVKKGIVVSNKMQKTVVVKVERTFAHPQYGKIVTRGKKYYAHNESGDLQIGDEVKIMETRPLSKLKRWRVVA.

Belongs to the universal ribosomal protein uS17 family. In terms of assembly, part of the 30S ribosomal subunit.

One of the primary rRNA binding proteins, it binds specifically to the 5'-end of 16S ribosomal RNA. The chain is Small ribosomal subunit protein uS17 from Protochlamydia amoebophila (strain UWE25).